A 150-amino-acid chain; its full sequence is Deoxyuridine 5'-triphosphate nucleotidohydrolase (150 aa).

Residues Arg69–Gly71, Asn82, Leu86–Asp88, and Lys96 each bind substrate.

The protein belongs to the dUTPase family. Mg(2+) serves as cofactor.

It catalyses the reaction dUTP + H2O = dUMP + diphosphate + H(+). It functions in the pathway pyrimidine metabolism; dUMP biosynthesis; dUMP from dCTP (dUTP route): step 2/2. In terms of biological role, this enzyme is involved in nucleotide metabolism: it produces dUMP, the immediate precursor of thymidine nucleotides and it decreases the intracellular concentration of dUTP so that uracil cannot be incorporated into DNA. The protein is Deoxyuridine 5'-triphosphate nucleotidohydrolase of Neisseria gonorrhoeae (strain ATCC 700825 / FA 1090).